The chain runs to 369 residues: Succinyl-diaminopimelate desuccinylase (369 aa).

Histidine 77 contributes to the Zn(2+) binding site. Aspartate 79 is an active-site residue. Aspartate 103 lines the Zn(2+) pocket. The active-site Proton acceptor is the glutamate 136. Zn(2+)-binding residues include glutamate 137, glutamate 165, and histidine 345.

This sequence belongs to the peptidase M20A family. It depends on Zn(2+) as a cofactor. Co(2+) is required as a cofactor.

The catalysed reaction is N-succinyl-(2S,6S)-2,6-diaminopimelate + H2O = (2S,6S)-2,6-diaminopimelate + succinate. It functions in the pathway amino-acid biosynthesis; L-lysine biosynthesis via DAP pathway; LL-2,6-diaminopimelate from (S)-tetrahydrodipicolinate (succinylase route): step 3/3. The chain is Succinyl-diaminopimelate desuccinylase (dapE) from Corynebacterium glutamicum (strain ATCC 13032 / DSM 20300 / JCM 1318 / BCRC 11384 / CCUG 27702 / LMG 3730 / NBRC 12168 / NCIMB 10025 / NRRL B-2784 / 534).